A 294-amino-acid chain; its full sequence is Bifunctional protein FolD (294 aa).

Residues 166–168 (GRS), serine 191, and isoleucine 232 contribute to the NADP(+) site.

It belongs to the tetrahydrofolate dehydrogenase/cyclohydrolase family. Homodimer.

The catalysed reaction is (6R)-5,10-methylene-5,6,7,8-tetrahydrofolate + NADP(+) = (6R)-5,10-methenyltetrahydrofolate + NADPH. It carries out the reaction (6R)-5,10-methenyltetrahydrofolate + H2O = (6R)-10-formyltetrahydrofolate + H(+). Its pathway is one-carbon metabolism; tetrahydrofolate interconversion. Catalyzes the oxidation of 5,10-methylenetetrahydrofolate to 5,10-methenyltetrahydrofolate and then the hydrolysis of 5,10-methenyltetrahydrofolate to 10-formyltetrahydrofolate. The sequence is that of Bifunctional protein FolD from Nitrobacter winogradskyi (strain ATCC 25391 / DSM 10237 / CIP 104748 / NCIMB 11846 / Nb-255).